Reading from the N-terminus, the 525-residue chain is GMP synthase [glutamine-hydrolyzing] (525 aa).

The Glutamine amidotransferase type-1 domain maps to 8–207 (KILILDFGSQ…ALDICGCAAN (200 aa)). Cys-85 acts as the Nucleophile in catalysis. Active-site residues include His-181 and Glu-183. Residues 208–400 (WKPSSIIEDA…LGLPYNMLYR (193 aa)) enclose the GMPS ATP-PPase domain. Residue 235–241 (SGGVDSS) coordinates ATP.

In terms of assembly, homodimer.

It catalyses the reaction XMP + L-glutamine + ATP + H2O = GMP + L-glutamate + AMP + diphosphate + 2 H(+). The protein operates within purine metabolism; GMP biosynthesis; GMP from XMP (L-Gln route): step 1/1. Functionally, catalyzes the synthesis of GMP from XMP. This is GMP synthase [glutamine-hydrolyzing] from Shewanella putrefaciens (strain CN-32 / ATCC BAA-453).